The primary structure comprises 527 residues: F-box-like/WD repeat-containing protein TBL1X (527 aa).

Ser-2 carries the N-acetylserine modification. Positions 4-36 constitute a LisH domain; it reads TSDEVNFLVYRYLQESGFSHSAFTFGIESHISQ. The F-box-like domain maps to 41 to 86; sequence GTLVPPAALISILQKGLQYVEAEISINEDGTVFDGRPIESLSLIDA. Lys-102 is modified (N6-acetyllysine). The segment at 127–164 is disordered; it reads TTPAAAAQQNPPKNGEATVNGEENGAHAINNHSKPMEI. 8 WD repeats span residues 180–219, 236–275, 277–316, 319–359, 360–399, 402–450, 453–492, and 494–526; these read GHES…NGGS, PSNK…ASTL, QHKG…AKQQ, FHSA…KTFQ, GHTN…CVHD, AHSK…CIHT, KHQE…LVHS, and RGTG…LDLR. Residue Lys-290 forms a Glycyl lysine isopeptide (Lys-Gly) (interchain with G-Cter in SUMO2) linkage.

This sequence belongs to the WD repeat EBI family. In terms of assembly, homotetramer; dimer of dimers. Component of the N-Cor repressor complex, at least composed of NCOR1, NCOR2, HDAC3, TBL1X, TBL1R, CORO2A and GPS2. Component of a E3 ubiquitin ligase complex containing UBE2D1, SIAH1, CACYBP/SIP, SKP1, APC and TBL1X. Interacts with GPS2 (when sumoylated); leading to protect GPS2 against degradation by the proteasome. Probably part of other corepressor complexes, that do not contain NCOR1 and NCOR2. Interacts with histones H2B, H3a and H4. Interacts with MECP2; recruits TBL1X to the heterochromatin foci. Interacts with USP44. Expressed in the cochlea.

It is found in the nucleus. Functionally, F-box-like protein involved in the recruitment of the ubiquitin/19S proteasome complex to nuclear receptor-regulated transcription units. Plays an essential role in transcription activation mediated by nuclear receptors. Probably acts as integral component of corepressor complexes that mediates the recruitment of the 19S proteasome complex, leading to the subsequent proteasomal degradation of transcription repressor complexes, thereby allowing cofactor exchange. The chain is F-box-like/WD repeat-containing protein TBL1X (Tbl1x) from Mus musculus (Mouse).